The chain runs to 156 residues: AP-1 complex subunit sigma-1 (156 aa).

It belongs to the adaptor complexes small subunit family. In terms of assembly, adaptor protein complex 1 (AP-1) is a heterotetramer composed of two large adaptins (gamma-type subunit and beta-type subunit), a medium adaptin (mu-type subunit) and a small adaptin (sigma-type subunit).

Its subcellular location is the golgi apparatus. The protein resides in the trans-Golgi network. The protein localises to the cytoplasmic vesicle. It is found in the clathrin-coated vesicle membrane. Its function is as follows. Subunit of clathrin-associated adaptor protein complex 1 that plays a role in protein sorting in the trans-Golgi network (TGN) and endosomes. The AP complexes mediate the recruitment of clathrin to membranes and the recognition of sorting signals within the cytosolic tails of transmembrane cargo molecules. Also involved in early steps of phagocytosis and macropinocytosis. This chain is AP-1 complex subunit sigma-1 (ap1s1), found in Dictyostelium discoideum (Social amoeba).